The sequence spans 61 residues: APATYAIDPTHTFATFEIDHNGASTNRVRFKSGTVEFDRXAKAETNGGDFEARIDRNAFGV.

It belongs to the UPF0312 family.

The chain is UPF0312 protein from Delftia acidovorans (Pseudomonas acidovorans).